The following is a 245-amino-acid chain: GTP cyclohydrolase 1 type 2 homolog (245 aa).

A divalent metal cation-binding residues include histidine 63, histidine 64, aspartate 100, histidine 213, and glutamate 217.

This sequence belongs to the GTP cyclohydrolase I type 2/NIF3 family. In terms of assembly, homohexamer.

The chain is GTP cyclohydrolase 1 type 2 homolog from Archaeoglobus fulgidus (strain ATCC 49558 / DSM 4304 / JCM 9628 / NBRC 100126 / VC-16).